Reading from the N-terminus, the 451-residue chain is Chromosomal replication initiator protein DnaA (451 aa).

A domain I, interacts with DnaA modulators region spans residues M1–S94. The segment at E87–K106 is disordered. The domain II stretch occupies residues A95–S113. Residues Y114–A331 form a domain III, AAA+ region region. ATP is bound by residues G159, G161, K162, and T163. The domain IV, binds dsDNA stretch occupies residues E332–V451.

The protein belongs to the DnaA family. Oligomerizes as a right-handed, spiral filament on DNA at oriC.

It localises to the cytoplasm. Functionally, plays an essential role in the initiation and regulation of chromosomal replication. ATP-DnaA binds to the origin of replication (oriC) to initiate formation of the DNA replication initiation complex once per cell cycle. Binds the DnaA box (a 9 base pair repeat at the origin) and separates the double-stranded (ds)DNA. Forms a right-handed helical filament on oriC DNA; dsDNA binds to the exterior of the filament while single-stranded (ss)DNA is stabiized in the filament's interior. The ATP-DnaA-oriC complex binds and stabilizes one strand of the AT-rich DNA unwinding element (DUE), permitting loading of DNA polymerase. After initiation quickly degrades to an ADP-DnaA complex that is not apt for DNA replication. Binds acidic phospholipids. The polypeptide is Chromosomal replication initiator protein DnaA (Pasteurella multocida (strain Pm70)).